We begin with the raw amino-acid sequence, 149 residues long: Transthyretin (149 aa).

The signal sequence occupies residues 1-20 (MAFHSLLLLCLAGLLFVSEA). Cys32 is modified (sulfocysteine). An L-thyroxine-binding site is contributed by Lys37. A 4-carboxyglutamate modification is found at Glu64. L-thyroxine contacts are provided by Glu76 and Ser139.

The protein belongs to the transthyretin family. As to quaternary structure, homotetramer. Dimer of dimers. In the homotetramer, subunits assemble around a central channel that can accommodate two ligand molecules. Interacts with RBP4. In terms of processing, sulfonation of the reactive cysteine Cys-32 enhances the stability of the native conformation of TTR, avoiding misassembly of the protein leading to amyloid formation. As to expression, detected in plasma (at protein level). Detected in liver.

Its subcellular location is the secreted. In terms of biological role, thyroid hormone-binding protein. Probably transports thyroxine from the bloodstream to the brain. The protein is Transthyretin (TTR) of Petaurus breviceps (Australian sugar glider).